We begin with the raw amino-acid sequence, 296 residues long: MAEISTARGSLVAIVTPMSDDGALDLGALRRLIDWHIEQGTDGIVIVGTTGESPTVNFDEHCLLIRTAVEQAGGRVPVIAGTGANSTSEAIALTECARAAGAQAGLSVVPYYNKPTQEGLYQHYRKIAEAVDLPLILYNVPGRTVADLANDTAVRLAEVPGIVGLKDATGNMERAADLVRRVPKGFALYSGDDASALPFMLLGGHGVISVTANVAPRLMHEMCVAAFEGNLARARECNDALLPLHSKLFVEANPIPVKWACAELGLIPPGLRLPLTPLSGGQHEVVRAAMRHAELI.

Position 50 (threonine 50) interacts with pyruvate. The Proton donor/acceptor role is filled by tyrosine 138. Lysine 166 (schiff-base intermediate with substrate) is an active-site residue. Pyruvate is bound at residue isoleucine 208.

It belongs to the DapA family. Homotetramer; dimer of dimers.

The protein localises to the cytoplasm. The catalysed reaction is L-aspartate 4-semialdehyde + pyruvate = (2S,4S)-4-hydroxy-2,3,4,5-tetrahydrodipicolinate + H2O + H(+). It functions in the pathway amino-acid biosynthesis; L-lysine biosynthesis via DAP pathway; (S)-tetrahydrodipicolinate from L-aspartate: step 3/4. Functionally, catalyzes the condensation of (S)-aspartate-beta-semialdehyde [(S)-ASA] and pyruvate to 4-hydroxy-tetrahydrodipicolinate (HTPA). The protein is 4-hydroxy-tetrahydrodipicolinate synthase of Thiobacillus denitrificans (strain ATCC 25259 / T1).